Here is a 384-residue protein sequence, read N- to C-terminus: H-2 class I histocompatibility antigen, TLA(B) alpha chain (384 aa).

Residues 1 to 26 form the signal peptide; it reads MRMGTPVPGTLLILLAASQGQTQTCP. The segment at 27 to 116 is alpha-1; it reads GSHSLRYFYT…MLDYYNLSQN (90 aa). The Extracellular segment spans residues 27–314; sequence GSHSLRYFYT…TSMPNRTTVR (288 aa). Asn63, Asn112, and Asn116 each carry an N-linked (GlcNAc...) asparagine glycan. The tract at residues 117–208 is alpha-2; the sequence is GSHTIQVMYG…ENRKKTQECT (92 aa). 2 disulfides stabilise this stretch: Cys127/Cys190 and Cys229/Cys285. An alpha-3 region spans residues 209–300; the sequence is DPPKTHVTHH…GLPEPLTLRW (92 aa). The Ig-like C1-type domain maps to 211-299; the sequence is PKTHVTHHPR…EGLPEPLTLR (89 aa). The segment at 301–314 is connecting peptide; the sequence is EPPQTSMPNRTTVR. An N-linked (GlcNAc...) asparagine glycan is attached at Asn309. Residues 315 to 334 form a helical membrane-spanning segment; that stretch reads ALLGAMIILGFMSGSVMMWM. At 335 to 384 the chain is on the cytoplasmic side; that stretch reads RKNNGGNGDDNTAAYQNEREHLSLDPRAESEALGVEAGMKDLPSAPPLVS. Residues 354–364 are compositionally biased toward basic and acidic residues; the sequence is EHLSLDPRAES. The tract at residues 354-384 is disordered; sequence EHLSLDPRAESEALGVEAGMKDLPSAPPLVS.

It belongs to the MHC class I family. As to quaternary structure, heterodimer of an alpha chain and a beta chain (beta-2-microglobulin). TL antigens are only expressed on thymocytes, activated T-lymphocytes and on some thymic leukemias.

It localises to the membrane. In terms of biological role, involved in the presentation of foreign antigens to the immune system. The protein is H-2 class I histocompatibility antigen, TLA(B) alpha chain (H2-T3) of Mus musculus (Mouse).